We begin with the raw amino-acid sequence, 104 residues long: Flagellar hook-basal body complex protein FliE (104 aa).

Belongs to the FliE family.

The protein resides in the bacterial flagellum basal body. In Salmonella typhi, this protein is Flagellar hook-basal body complex protein FliE.